The following is a 409-amino-acid chain: Aspartic protease pepA (409 aa).

Residues 1–19 form the signal peptide; sequence MPSIVSLTAALTFVGAVIA. The propeptide at 20-65 is activation peptide; the sequence is SPVEKRSAFSVEQVPHTTYLKNGPAQKVKTLRKYGKPVPQSLLDAA. Residues 97 to 404 form the Peptidase A1 domain; that stretch reads YLSPVTVGST…PDSPPRIGLA (308 aa). Active-site residues include Asp-113 and Asp-293. The cysteines at positions 329 and 364 are disulfide-linked. N-linked (GlcNAc...) asparagine glycosylation is present at Asn-335.

The protein belongs to the peptidase A1 family. Monomer.

The protein localises to the secreted. Secreted aspartic endopeptidase that allows assimilation of proteinaceous substrates. The scissile peptide bond is attacked by a nucleophilic water molecule activated by two aspartic residues in the active site. Shows a broad primary substrate specificity. Favors hydrophobic residues at the P1 and P1' positions. This chain is Aspartic protease pepA, found in Leptosphaeria maculans (strain JN3 / isolate v23.1.3 / race Av1-4-5-6-7-8) (Blackleg fungus).